We begin with the raw amino-acid sequence, 101 residues long: Chaperone modulatory protein CbpM (101 aa).

The protein belongs to the CbpM family.

In terms of biological role, interacts with CbpA and inhibits both the DnaJ-like co-chaperone activity and the DNA binding activity of CbpA. Together with CbpA, modulates the activity of the DnaK chaperone system. Does not inhibit the co-chaperone activity of DnaJ. This is Chaperone modulatory protein CbpM from Pseudomonas putida (strain GB-1).